The sequence spans 416 residues: Serine hydroxymethyltransferase (416 aa).

Residues leucine 121 and 125–127 (GHL) each bind (6S)-5,6,7,8-tetrahydrofolate. Lysine 230 carries the post-translational modification N6-(pyridoxal phosphate)lysine.

Belongs to the SHMT family. As to quaternary structure, homodimer. The cofactor is pyridoxal 5'-phosphate.

The protein localises to the cytoplasm. It carries out the reaction (6R)-5,10-methylene-5,6,7,8-tetrahydrofolate + glycine + H2O = (6S)-5,6,7,8-tetrahydrofolate + L-serine. The protein operates within one-carbon metabolism; tetrahydrofolate interconversion. It functions in the pathway amino-acid biosynthesis; glycine biosynthesis; glycine from L-serine: step 1/1. Functionally, catalyzes the reversible interconversion of serine and glycine with tetrahydrofolate (THF) serving as the one-carbon carrier. This reaction serves as the major source of one-carbon groups required for the biosynthesis of purines, thymidylate, methionine, and other important biomolecules. Also exhibits THF-independent aldolase activity toward beta-hydroxyamino acids, producing glycine and aldehydes, via a retro-aldol mechanism. This is Serine hydroxymethyltransferase from Nitrosomonas europaea (strain ATCC 19718 / CIP 103999 / KCTC 2705 / NBRC 14298).